The primary structure comprises 339 residues: Anthranilate phosphoribosyltransferase (339 aa).

5-phospho-alpha-D-ribose 1-diphosphate contacts are provided by residues G82, 85 to 86, T90, 92 to 95, and 110 to 118; these read GD, NIST, and KHGNRAVSS. An anthranilate-binding site is contributed by G82. S94 contributes to the Mg(2+) binding site. Residues N113 and R168 each coordinate anthranilate. Positions 227 and 228 each coordinate Mg(2+).

Belongs to the anthranilate phosphoribosyltransferase family. In terms of assembly, homodimer. Requires Mg(2+) as cofactor.

It catalyses the reaction N-(5-phospho-beta-D-ribosyl)anthranilate + diphosphate = 5-phospho-alpha-D-ribose 1-diphosphate + anthranilate. It participates in amino-acid biosynthesis; L-tryptophan biosynthesis; L-tryptophan from chorismate: step 2/5. Its function is as follows. Catalyzes the transfer of the phosphoribosyl group of 5-phosphorylribose-1-pyrophosphate (PRPP) to anthranilate to yield N-(5'-phosphoribosyl)-anthranilate (PRA). The chain is Anthranilate phosphoribosyltransferase from Clostridium beijerinckii (strain ATCC 51743 / NCIMB 8052) (Clostridium acetobutylicum).